The primary structure comprises 187 residues: Ras-like protein rasD (187 aa).

GTP is bound at residue 10 to 17; sequence GGGGVGKS. The Effector region motif lies at 32 to 40; it reads YDPTIEDSY. GTP is bound by residues 57-61 and 116-119; these read DTAGQ and NKAD. Position 184 is a cysteine methyl ester (C184). The S-geranylgeranyl cysteine moiety is linked to residue C184. Residues 185–187 constitute a propeptide, removed in mature form; the sequence is LIL.

The protein belongs to the small GTPase superfamily. Ras family.

The protein localises to the cell membrane. The enzyme catalyses GTP + H2O = GDP + phosphate + H(+). Alternates between an inactive form bound to GDP and an active form bound to GTP. Activated by a guanine nucleotide-exchange factor (GEF) and inactivated by a GTPase-activating protein (GAP). Its function is as follows. Ras proteins bind GDP/GTP and possess intrinsic GTPase activity. The polypeptide is Ras-like protein rasD (rasD) (Dictyostelium discoideum (Social amoeba)).